Consider the following 775-residue polypeptide: Acylamino-acid-releasing enzyme 1 (775 aa).

Catalysis depends on charge relay system residues Ser627, Asp718, and His750.

Belongs to the peptidase S9C family. As to quaternary structure, homotetramer.

It localises to the cytoplasm. It catalyses the reaction Cleavage of an N-acetyl or N-formyl amino acid from the N-terminus of a polypeptide.. Catalyzes the hydrolysis of the N-terminal peptide bond of an N-acetylated peptide to generate an N-acetylated amino acid and a peptide with a free N-terminus. In Oryza sativa subsp. japonica (Rice), this protein is Acylamino-acid-releasing enzyme 1.